The primary structure comprises 429 residues: 3-isopropylmalate dehydratase large subunit (429 aa).

Residues Cys-303, Cys-363, and Cys-366 each contribute to the [4Fe-4S] cluster site.

It belongs to the aconitase/IPM isomerase family. LeuC type 2 subfamily. As to quaternary structure, heterodimer of LeuC and LeuD. Requires [4Fe-4S] cluster as cofactor.

The enzyme catalyses (2R,3S)-3-isopropylmalate = (2S)-2-isopropylmalate. The protein operates within amino-acid biosynthesis; L-leucine biosynthesis; L-leucine from 3-methyl-2-oxobutanoate: step 2/4. Functionally, catalyzes the isomerization between 2-isopropylmalate and 3-isopropylmalate, via the formation of 2-isopropylmaleate. The sequence is that of 3-isopropylmalate dehydratase large subunit from Caldicellulosiruptor bescii (strain ATCC BAA-1888 / DSM 6725 / KCTC 15123 / Z-1320) (Anaerocellum thermophilum).